The sequence spans 292 residues: Phosphatidylserine decarboxylase proenzyme (292 aa).

Active-site charge relay system; for autoendoproteolytic cleavage activity residues include Asp89, His146, and Ser252. Ser252 acts as the Schiff-base intermediate with substrate; via pyruvic acid; for decarboxylase activity in catalysis. At Ser252 the chain carries Pyruvic acid (Ser); by autocatalysis.

Belongs to the phosphatidylserine decarboxylase family. PSD-B subfamily. Prokaryotic type I sub-subfamily. As to quaternary structure, heterodimer of a large membrane-associated beta subunit and a small pyruvoyl-containing alpha subunit. It depends on pyruvate as a cofactor. Is synthesized initially as an inactive proenzyme. Formation of the active enzyme involves a self-maturation process in which the active site pyruvoyl group is generated from an internal serine residue via an autocatalytic post-translational modification. Two non-identical subunits are generated from the proenzyme in this reaction, and the pyruvate is formed at the N-terminus of the alpha chain, which is derived from the carboxyl end of the proenzyme. The autoendoproteolytic cleavage occurs by a canonical serine protease mechanism, in which the side chain hydroxyl group of the serine supplies its oxygen atom to form the C-terminus of the beta chain, while the remainder of the serine residue undergoes an oxidative deamination to produce ammonia and the pyruvoyl prosthetic group on the alpha chain. During this reaction, the Ser that is part of the protease active site of the proenzyme becomes the pyruvoyl prosthetic group, which constitutes an essential element of the active site of the mature decarboxylase.

The protein resides in the cell membrane. The catalysed reaction is a 1,2-diacyl-sn-glycero-3-phospho-L-serine + H(+) = a 1,2-diacyl-sn-glycero-3-phosphoethanolamine + CO2. Its pathway is phospholipid metabolism; phosphatidylethanolamine biosynthesis; phosphatidylethanolamine from CDP-diacylglycerol: step 2/2. Its function is as follows. Catalyzes the formation of phosphatidylethanolamine (PtdEtn) from phosphatidylserine (PtdSer). The polypeptide is Phosphatidylserine decarboxylase proenzyme (Shewanella baltica (strain OS185)).